Reading from the N-terminus, the 227-residue chain is 27 kDa glycoprotein (227 aa).

The N-terminal stretch at 1 to 17 (MMWKTVLITIFAAGVLA) is a signal peptide. Asn-118 and Asn-173 each carry an N-linked (GlcNAc...) asparagine glycan.

This sequence belongs to the UPF0408 family. As to expression, expressed in the subesophageal body, fat bodies, hemocytes, midgut and Malpighian tubules. Not expressed in silk glands.

The protein resides in the secreted. The polypeptide is 27 kDa glycoprotein (Bombyx mori (Silk moth)).